The chain runs to 390 residues: E3 ubiquitin-protein ligase At4g11680 (390 aa).

Residues 1-19 are compositionally biased toward low complexity; the sequence is MSSSSSTTTNTTTESDSSS. The disordered stretch occupies residues 1–39; sequence MSSSSSTTTNTTTESDSSSLPTHIGRSNSDGIIDTTPFL. 5 helical membrane passes run 109 to 129, 142 to 162, 212 to 232, 244 to 264, and 265 to 285; these read VVFL…AVLI, VWVV…CVEY, MFSF…GQTL, IIFL…ACVI, and GLAV…VADQ. Residues 338–379 form an RING-type; atypical zinc finger; sequence CCICLCEYEDGVELRELPCNHHFHCTCIDKWLHINSRCPLCK.

The protein resides in the membrane. The enzyme catalyses S-ubiquitinyl-[E2 ubiquitin-conjugating enzyme]-L-cysteine + [acceptor protein]-L-lysine = [E2 ubiquitin-conjugating enzyme]-L-cysteine + N(6)-ubiquitinyl-[acceptor protein]-L-lysine.. It functions in the pathway protein modification; protein ubiquitination. Functionally, mediates E2-dependent protein ubiquitination in vitro. This Arabidopsis thaliana (Mouse-ear cress) protein is E3 ubiquitin-protein ligase At4g11680.